We begin with the raw amino-acid sequence, 218 residues long: NAD(P)H-quinone oxidoreductase subunit I (218 aa).

4Fe-4S ferredoxin-type domains are found at residues 55–84 (GRIHYEFDKCIACEVCVRVCPINLPVVDWV) and 95–124 (RNYSIDFGVCIFCGNCVEYCPTNCLSMTEE). Residues C64, C67, C70, C74, C104, C107, C110, and C114 each coordinate [4Fe-4S] cluster. Residues 192 to 218 (LSLQQDSLQGDEGESLQDAPDQDQPKG) are disordered.

The protein belongs to the complex I 23 kDa subunit family. NDH-1 is composed of at least 11 different subunits. Requires [4Fe-4S] cluster as cofactor.

The protein resides in the cellular thylakoid membrane. It catalyses the reaction a plastoquinone + NADH + (n+1) H(+)(in) = a plastoquinol + NAD(+) + n H(+)(out). The catalysed reaction is a plastoquinone + NADPH + (n+1) H(+)(in) = a plastoquinol + NADP(+) + n H(+)(out). NDH-1 shuttles electrons from an unknown electron donor, via FMN and iron-sulfur (Fe-S) centers, to quinones in the respiratory and/or the photosynthetic chain. The immediate electron acceptor for the enzyme in this species is believed to be plastoquinone. Couples the redox reaction to proton translocation, and thus conserves the redox energy in a proton gradient. This chain is NAD(P)H-quinone oxidoreductase subunit I, found in Prochlorococcus marinus (strain MIT 9303).